Reading from the N-terminus, the 276-residue chain is Malonyl-[acyl-carrier protein] O-methyltransferase (276 aa).

Belongs to the methyltransferase superfamily.

It catalyses the reaction malonyl-[ACP] + S-adenosyl-L-methionine = malonyl-[ACP] methyl ester + S-adenosyl-L-homocysteine. It participates in cofactor biosynthesis; biotin biosynthesis. Its function is as follows. Converts the free carboxyl group of a malonyl-thioester to its methyl ester by transfer of a methyl group from S-adenosyl-L-methionine (SAM). It allows to synthesize pimeloyl-ACP via the fatty acid synthetic pathway. The sequence is that of Malonyl-[acyl-carrier protein] O-methyltransferase from Paenibacillus sp. (strain JDR-2).